A 224-amino-acid chain; its full sequence is Lipoprotein-releasing system ATP-binding protein LolD (224 aa).

The region spanning 6 to 224 (VRLRELRRSF…VVRLHEGVLE (219 aa)) is the ABC transporter domain. 42–49 (GPSGSGKS) contributes to the ATP binding site.

This sequence belongs to the ABC transporter superfamily. Lipoprotein translocase (TC 3.A.1.125) family. In terms of assembly, the complex is composed of two ATP-binding proteins (LolD) and two transmembrane proteins (LolC and LolE).

Its subcellular location is the cell inner membrane. Functionally, part of the ABC transporter complex LolCDE involved in the translocation of mature outer membrane-directed lipoproteins, from the inner membrane to the periplasmic chaperone, LolA. Responsible for the formation of the LolA-lipoprotein complex in an ATP-dependent manner. The polypeptide is Lipoprotein-releasing system ATP-binding protein LolD (Novosphingobium aromaticivorans (strain ATCC 700278 / DSM 12444 / CCUG 56034 / CIP 105152 / NBRC 16084 / F199)).